Reading from the N-terminus, the 194-residue chain is Peptidyl-tRNA hydrolase (194 aa).

Tyrosine 17 provides a ligand contact to tRNA. The Proton acceptor role is filled by histidine 22. TRNA contacts are provided by phenylalanine 68, asparagine 70, and asparagine 116.

This sequence belongs to the PTH family. In terms of assembly, monomer.

Its subcellular location is the cytoplasm. The catalysed reaction is an N-acyl-L-alpha-aminoacyl-tRNA + H2O = an N-acyl-L-amino acid + a tRNA + H(+). Hydrolyzes ribosome-free peptidyl-tRNAs (with 1 or more amino acids incorporated), which drop off the ribosome during protein synthesis, or as a result of ribosome stalling. In terms of biological role, catalyzes the release of premature peptidyl moieties from peptidyl-tRNA molecules trapped in stalled 50S ribosomal subunits, and thus maintains levels of free tRNAs and 50S ribosomes. This is Peptidyl-tRNA hydrolase from Haemophilus influenzae (strain PittGG).